A 570-amino-acid polypeptide reads, in one-letter code: Proline--tRNA ligase (570 aa).

Belongs to the class-II aminoacyl-tRNA synthetase family. ProS type 1 subfamily. In terms of assembly, homodimer.

It is found in the cytoplasm. The enzyme catalyses tRNA(Pro) + L-proline + ATP = L-prolyl-tRNA(Pro) + AMP + diphosphate. Its function is as follows. Catalyzes the attachment of proline to tRNA(Pro) in a two-step reaction: proline is first activated by ATP to form Pro-AMP and then transferred to the acceptor end of tRNA(Pro). As ProRS can inadvertently accommodate and process non-cognate amino acids such as alanine and cysteine, to avoid such errors it has two additional distinct editing activities against alanine. One activity is designated as 'pretransfer' editing and involves the tRNA(Pro)-independent hydrolysis of activated Ala-AMP. The other activity is designated 'posttransfer' editing and involves deacylation of mischarged Ala-tRNA(Pro). The misacylated Cys-tRNA(Pro) is not edited by ProRS. This Neisseria meningitidis serogroup A / serotype 4A (strain DSM 15465 / Z2491) protein is Proline--tRNA ligase.